The sequence spans 155 residues: 2-C-methyl-D-erythritol 2,4-cyclodiphosphate synthase (155 aa).

A divalent metal cation contacts are provided by D9 and H11. 4-CDP-2-C-methyl-D-erythritol 2-phosphate-binding positions include 9-11 (DSH) and 35-36 (HS). H43 contacts a divalent metal cation. 57–59 (DIG) lines the 4-CDP-2-C-methyl-D-erythritol 2-phosphate pocket.

This sequence belongs to the IspF family. Homotrimer. The cofactor is a divalent metal cation.

The catalysed reaction is 4-CDP-2-C-methyl-D-erythritol 2-phosphate = 2-C-methyl-D-erythritol 2,4-cyclic diphosphate + CMP. It participates in isoprenoid biosynthesis; isopentenyl diphosphate biosynthesis via DXP pathway; isopentenyl diphosphate from 1-deoxy-D-xylulose 5-phosphate: step 4/6. Its function is as follows. Involved in the biosynthesis of isopentenyl diphosphate (IPP) and dimethylallyl diphosphate (DMAPP), two major building blocks of isoprenoid compounds. Catalyzes the conversion of 4-diphosphocytidyl-2-C-methyl-D-erythritol 2-phosphate (CDP-ME2P) to 2-C-methyl-D-erythritol 2,4-cyclodiphosphate (ME-CPP) with a corresponding release of cytidine 5-monophosphate (CMP). The chain is 2-C-methyl-D-erythritol 2,4-cyclodiphosphate synthase from Koribacter versatilis (strain Ellin345).